We begin with the raw amino-acid sequence, 427 residues long: Protein TolB homolog (427 aa).

A signal peptide spans 1–20; that stretch reads MLRRIFVSTFLVFGIVSLYA.

The protein belongs to the TolB family.

It is found in the periplasm. This is Protein TolB homolog from Chlamydia caviae (strain ATCC VR-813 / DSM 19441 / 03DC25 / GPIC) (Chlamydophila caviae).